Consider the following 68-residue polypeptide: Protein SlyX homolog (68 aa).

Belongs to the SlyX family.

The polypeptide is Protein SlyX homolog (Pseudomonas fluorescens (strain Pf0-1)).